Here is a 569-residue protein sequence, read N- to C-terminus: 2-isopropylmalate synthase (569 aa).

A Pyruvate carboxyltransferase domain is found at 31–305 (PRWMSTDLRD…APELDFSDID (275 aa)). D40, H244, H246, and N280 together coordinate Mg(2+). The regulatory domain stretch occupies residues 437–569 (RETPLRYVSH…TASASAATEA (133 aa)).

Belongs to the alpha-IPM synthase/homocitrate synthase family. LeuA type 2 subfamily. In terms of assembly, homodimer. The cofactor is Mg(2+).

It localises to the cytoplasm. The catalysed reaction is 3-methyl-2-oxobutanoate + acetyl-CoA + H2O = (2S)-2-isopropylmalate + CoA + H(+). The protein operates within amino-acid biosynthesis; L-leucine biosynthesis; L-leucine from 3-methyl-2-oxobutanoate: step 1/4. Functionally, catalyzes the condensation of the acetyl group of acetyl-CoA with 3-methyl-2-oxobutanoate (2-ketoisovalerate) to form 3-carboxy-3-hydroxy-4-methylpentanoate (2-isopropylmalate). This is 2-isopropylmalate synthase from Cupriavidus taiwanensis (strain DSM 17343 / BCRC 17206 / CCUG 44338 / CIP 107171 / LMG 19424 / R1) (Ralstonia taiwanensis (strain LMG 19424)).